Consider the following 1030-residue polypeptide: MMS19 nucleotide excision repair protein homolog (1030 aa).

Ala-2 carries the post-translational modification N-acetylalanine. HEAT repeat units lie at residues 866–904 (QRFF…RLPK), 908–946 (LPEL…EAPQ), 949–987 (SLHV…LPTP), and 990–1028 (LPYK…LGSP). At Ser-1027 the chain carries Phosphoserine.

Belongs to the MET18/MMS19 family. In terms of assembly, component of the CIA complex. In the CIA complex, interacts directly with CIAO2B and CIAO3. Component of the MMXD complex, composed of CIAO1, ERCC2, CIAO2B, MMS19 and SLC25A5. Interacts with CIAO2B; the interaction is direct. Interacts with ERCC2/XPD; the interaction is direct. Interacts with ERCC3/XPB and NCOA3/RAC3. Interacts with RTEL1; the interaction mediates the association of RTEL1 with the CIA complex. Interacts with BRIP1. Interacts with KIF4A; the interaction facilitates the transfer of Fe-S clusters to KIF4A to ensure proper localization of KIF4A to the mitotic machinery components. Interacts with CCDC117; the interaction is indirect. In terms of processing, ubiquitinated; undergoes 'Lys-48'-linked polyubiquitination.

It is found in the nucleus. It localises to the cytoplasm. The protein resides in the cytoskeleton. The protein localises to the spindle. Functionally, key component of the cytosolic iron-sulfur protein assembly (CIA) complex, a multiprotein complex that mediates the incorporation of iron-sulfur cluster into apoproteins specifically involved in DNA metabolism and genomic integrity. In the CIA complex, MMS19 acts as an adapter between early-acting CIA components and a subset of cellular target Fe/S proteins such as ERCC2/XPD, FANCJ and RTEL1, thereby playing a key role in nucleotide excision repair (NER), homologous recombination-mediated double-strand break DNA repair, DNA replication and RNA polymerase II (POL II) transcription. As a CIA complex component and in collaboration with CIAO1 and CIAO2, binds to and facilitates the assembly of most cytosolic-nuclear Fe/S proteins. As part of the mitotic spindle-associated MMXD complex, plays a role in chromosome segregation, probably by facilitating iron-sulfur cluster assembly into ERCC2/XPD. Together with CIAO2, facilitates the transfer of Fe-S clusters to the motor protein KIF4A, which ensures proper localization of KIF4A to mitotic machinery components to promote the progression of mitosis. Indirectly acts as a transcriptional coactivator of estrogen receptor (ER), via its role in iron-sulfur insertion into some component of the TFIIH-machinery. The chain is MMS19 nucleotide excision repair protein homolog from Bos taurus (Bovine).